Consider the following 651-residue polypeptide: Mitochondrial sodium/calcium exchanger protein (651 aa).

The helical transmembrane segment at Val51–Ile71 threads the bilayer. Over Ala72–Glu91 the chain is Cytoplasmic. Residues Ser92–Ile112 form a helical membrane-spanning segment. At Ser113 to Ala126 the chain is on the extracellular side. A helical transmembrane segment spans residues Leu127–Phe147. Residues Thr148–Asp161 lie on the Cytoplasmic side of the membrane. Residues Leu162–Ile182 form a helical membrane-spanning segment. Position 183 (Glu183) is a topological domain, extracellular. Residues Val184 to Leu204 form a helical membrane-spanning segment. At Gly205–Asn398 the chain is on the cytoplasmic side. Residues Ile399–Val419 traverse the membrane as a helical segment. Residues Pro420–Lys428 lie on the Extracellular side of the membrane. Residues Pro429 to Ile449 form a helical membrane-spanning segment. The Cytoplasmic portion of the chain corresponds to Thr450–Pro458. A helical transmembrane segment spans residues Gly459–Leu479. Over Pro480–Lys486 the chain is Extracellular. A helical membrane pass occupies residues Tyr487–Thr507. The Cytoplasmic portion of the chain corresponds to Ser508–Glu510. A helical transmembrane segment spans residues Ile511–Leu531. The Extracellular segment spans residues Thr532–Met559. Residues Ala560–Ile580 form a helical membrane-spanning segment. Residues Ala581–Val595 are Cytoplasmic-facing. The helical transmembrane segment at Tyr596 to Ile616 threads the bilayer. Over Gln617–Ala626 the chain is Extracellular. The chain crosses the membrane as a helical span at residues Val627–Val647. The Cytoplasmic portion of the chain corresponds to Leu648 to Asn651.

This sequence belongs to the Ca(2+):cation antiporter (CaCA) (TC 2.A.19) family. SLC24A subfamily. Expressed in the seam cells of the organism. Expression is visible in the seam cells across all larval stages, and expression persists into the adult stage of the organism.

The protein localises to the mitochondrion inner membrane. Its activity is regulated as follows. Inhibited by the sodium/calcium exchanger inhibitor CGP-37157. Its function is as follows. Mitochondrial sodium/calcium antiporter that mediates sodium-dependent calcium efflux from mitochondrion, thereby acting as a key regulator of mitochondrion calcium homeostasis. Required for patterning of neural circuits: functions in the same pathway as RAC-dependent effectors of the unc-6/netrin signaling pathway to set left/ right patterning of the VD/DD GABAergic circuit. The chain is Mitochondrial sodium/calcium exchanger protein from Caenorhabditis elegans.